Here is a 180-residue protein sequence, read N- to C-terminus: Centromere protein M (180 aa).

It localises to the nucleus. The protein resides in the chromosome. Its subcellular location is the centromere. Functionally, probable component of a centromeric complex involved in assembly of kinetochore proteins, mitotic progression and chromosome segregation. The chain is Centromere protein M (cenpm) from Xenopus laevis (African clawed frog).